Consider the following 44-residue polypeptide: Protein PsbN (44 aa).

The helical transmembrane segment at 6-26 (FFFTIFVWFLLISVTGYSIYV) threads the bilayer.

This sequence belongs to the PsbN family.

It is found in the plastid. Its subcellular location is the chloroplast thylakoid membrane. Functionally, may play a role in photosystem I and II biogenesis. The protein is Protein PsbN of Bigelowiella natans (Pedinomonas minutissima).